Consider the following 450-residue polypeptide: Chromosomal replication initiator protein DnaA (450 aa).

The segment at 1-84 is domain I, interacts with DnaA modulators; it reads MENIHDLWDR…AVKFIIPPNQ (84 aa). The tract at residues 84-111 is domain II; that stretch reads QDDEELEFQSSKKKQRKPYEETNDFPQS. The segment at 89–108 is disordered; the sequence is LEFQSSKKKQRKPYEETNDF. A domain III, AAA+ region region spans residues 112–328; that stretch reads MLNPKYTFDT…GALIRVVAYS (217 aa). G156, G158, K159, and T160 together coordinate ATP. The tract at residues 329–450 is domain IV, binds dsDNA; it reads SLINKEITAD…QEIQEKLKQL (122 aa).

The protein belongs to the DnaA family. As to quaternary structure, oligomerizes as a right-handed, spiral filament on DNA at oriC.

It is found in the cytoplasm. In terms of biological role, plays an essential role in the initiation and regulation of chromosomal replication. ATP-DnaA binds to the origin of replication (oriC) to initiate formation of the DNA replication initiation complex once per cell cycle. Binds the DnaA box (a 9 base pair repeat at the origin) and separates the double-stranded (ds)DNA. Forms a right-handed helical filament on oriC DNA; dsDNA binds to the exterior of the filament while single-stranded (ss)DNA is stabiized in the filament's interior. The ATP-DnaA-oriC complex binds and stabilizes one strand of the AT-rich DNA unwinding element (DUE), permitting loading of DNA polymerase. After initiation quickly degrades to an ADP-DnaA complex that is not apt for DNA replication. Binds acidic phospholipids. The polypeptide is Chromosomal replication initiator protein DnaA (Geobacillus kaustophilus (strain HTA426)).